The chain runs to 161 residues: Allophycocyanin subunit alpha 1 (161 aa).

Asparagine 71 carries the post-translational modification N4-methylasparagine. Cysteine 81 lines the (2R,3E)-phycocyanobilin pocket.

It belongs to the phycobiliprotein family. As to quaternary structure, heterohexamer of two alpha chains, one alpha-B chain and three beta chains. Contains one covalently linked phycocyanobilin chromophore. The chromophore is added by phycocyanobilin lyase CpcS 1.

It is found in the cellular thylakoid membrane. In terms of biological role, light-harvesting photosynthetic bile pigment-protein from the phycobiliprotein complex. Allophycocyanin has a maximum absorption at approximately 650 to 653 nanometers. This is Allophycocyanin subunit alpha 1 (apcA1) from Nostoc sp. (strain PCC 7120 / SAG 25.82 / UTEX 2576).